Consider the following 147-residue polypeptide: Putative cystatin-9-like protein CST9LP1 (147 aa).

A signal peptide spans 1–28; sequence MWSLPPSRALSCAPLLLLFSFQFLVTYA. C98 and C108 form a disulfide bridge. N-linked (GlcNAc...) asparagine glycans are attached at residues N117 and N139. Cysteines 122 and 142 form a disulfide.

The protein belongs to the cystatin family.

It localises to the secreted. The chain is Putative cystatin-9-like protein CST9LP1 (CST9LP1) from Homo sapiens (Human).